The sequence spans 272 residues: MASSSSNRQFSHRNANTFLTYPKCPENPEIACQMIWELVVRWIPKYILCAREAHKDGSLHLHALLQTEKPVRISDSRFFDINGFHPNIQSAKSVNRVRDYILKEPLAVFERGTFIPRKSPFLGKSDSEVKEKKPSKDEIMRDIISHSTSKEEYLSMIQKELPFDWSTKLQYFEYSANKLFPEIQEEFTNPHPPSSPDLLCNESINDWLQPNIFQVSPEAYMLLQPACYTLDDAISDLQWMDSVSSHQMKDQESRASTSSAQQEQENLLGPEA.

The region spanning 11 to 114 is the CRESS-DNA virus Rep endonuclease domain; it reads SHRNANTFLT…PLAVFERGTF (104 aa). An RCR-1 motif is present at residues 18 to 21; it reads FLTY. Glu52, His60, and His62 together coordinate a divalent metal cation. The RCR-2 motif lies at 60 to 62; it reads HLH. Tyr100 (for DNA cleavage activity) is an active-site residue. The short motif at 100–103 is the RCR-3 element; sequence YILK. Glu104 contributes to the a divalent metal cation binding site. Positions 175 to 187 are oligomerization; the sequence is SANKLFPEIQEEF. The tract at residues 198–202 is binding to RBR1; sequence LLCNE. Residues 221–230 form a transactivation region; it reads MLLQPACYTL. Residues 245–272 form a disordered region; sequence SHQMKDQESRASTSSAQQEQENLLGPEA. Residues 254–265 show a composition bias toward polar residues; it reads RASTSSAQQEQE.

This sequence belongs to the geminiviridae Rep protein family. Homooligomer. Interacts with host retinoblastoma-related protein 1 (RBR1), and may thereby deregulate the host cell cycle. Part of the C- and V-complexes which are RepA-Rep-DNA complexes involved in the c-sense and v-sense transcription. Mg(2+) serves as cofactor. It depends on Mn(2+) as a cofactor.

The protein localises to the host nucleus. The protein resides in the host cytoplasm. Its function is as follows. Implicated in enhancement of V-sense gene expression. Acts a an inhibitor of C-sense gene transcription. The chain is Replication-associated protein A from Avena sativa (Oat).